The sequence spans 327 residues: MSAVQEALPAVRSSRDATVRRFALTDAIFHATTRAAAILVLVLLGGVAISLFAGSWQALSTFGFSFLTSESWNPVTEKFGALAPIYGTVITSAIAILIAVPLGIGIAIFLTELCPRPLRRPIGMAVELLAGIPSIIYGIWGLFVLAPFLQTTVQPLIISMFHGIPGLNGLFAGPPYGIGLLTSAMILAIMILPFITSITKDVFDTVPSVLKESAYGIGCTTWEVTRRVVIPYTRIGIMGGVMLALGRALGETMAVTFVIGNAHRISTSLFAPATTISATIANEFTEAVGDLYTSSLVALGLILFVITFLILAIARYMLMRIDARTGA.

Transmembrane regions (helical) follow at residues 36–56, 89–109, 128–148, 178–198, 235–255, and 294–314; these read AAILVLVLLGGVAISLFAGSW, VITSAIAILIAVPLGIGIAIF, LLAGIPSIIYGIWGLFVLAPF, IGLLTSAMILAIMILPFITSI, IGIMGGVMLALGRALGETMAV, and SSLVALGLILFVITFLILAIA. The ABC transmembrane type-1 domain maps to 85–314; sequence IYGTVITSAI…VITFLILAIA (230 aa).

The protein belongs to the binding-protein-dependent transport system permease family. CysTW subfamily.

Its subcellular location is the cell inner membrane. In terms of biological role, part of a binding-protein-dependent transport system for phosphate; probably responsible for the translocation of the substrate across the membrane. This chain is Phosphate transport system permease protein PstC (pstC), found in Mesorhizobium japonicum (strain LMG 29417 / CECT 9101 / MAFF 303099) (Mesorhizobium loti (strain MAFF 303099)).